The chain runs to 289 residues: N-acetylmuramoyl-L-alanine amidase AmiA (289 aa).

Positions 1–34 (MSTFKPLKTLTSRRQVLKAGLAALTLSGMSQAIA) form a signal peptide, tat-type signal. A disordered region spans residues 39 to 63 (LKTSNGHSKPKAKKSGGKRVVVLDP). Residues 46–55 (SKPKAKKSGG) show a composition bias toward basic residues. Positions 59–273 (VVLDPGHGGI…IATAIAEGVI (215 aa)) constitute a MurNAc-LAA domain.

The protein belongs to the N-acetylmuramoyl-L-alanine amidase 3 family. Post-translationally, exported by the Tat system. The position of the signal peptide cleavage has not been experimentally proven. Can also be exported by the Sec system.

The protein localises to the periplasm. The catalysed reaction is Hydrolyzes the link between N-acetylmuramoyl residues and L-amino acid residues in certain cell-wall glycopeptides.. Functionally, cell-wall hydrolase involved in septum cleavage during cell division. Can also act as powerful autolysin in the presence of murein synthesis inhibitors. In Escherichia coli (strain K12), this protein is N-acetylmuramoyl-L-alanine amidase AmiA (amiA).